A 145-amino-acid polypeptide reads, in one-letter code: Polytheonamide B (145 aa).

A propeptide spanning residues 1–96 (MADSDNTPTS…DDDLDQAAGG (96 aa)) is cleaved from the precursor. T97 carries the 2-oxo-5,5-dimethylhexanoate modification. I99 bears the 3-methylisoleucine mark. The residue at position 101 (V101) is a 3-methylvaline. V102 carries the 3-methyl-D-valine modification. The residue at position 103 (V103) is a 3-methylvaline. Position 104 is a D-alanine (Ala) (A104). V105 is modified (3-methylvaline). 2 positions are modified to 3-methyl-D-valine: V106 and V110. Position 112 is an N4-methyl-D-asparagine (N112). T113 is subject to 3-hydroxyvaline (Thr). 3-methylvaline is present on V117. N4-methyl-D-asparagine is present on N118. Residue Q119 is modified to (3S)-3-methylglutamine. 3-hydroxy-D-valine is present on V120. N124 bears the N4-methyl-D-asparagine mark. N126 is modified ((3R)-N4-methyl-3-hydroxy-D-asparagine). The residue at position 127 (V127) is a 3-methylvaline. V128 is modified (3-hydroxy-D-valine). N4-methyl-D-asparagine is present on residues N130 and N132. (3R)-N4-methyl-3-hydroxy-D-asparagine is present on N134. N4-methyl-D-asparagine is present on N136. S138 carries the D-serine (Ser) modification. N140 is modified (D-asparagine). M141 is subject to 3,3-dimethylmethionine. At N142 the chain carries D-asparagine. T144 bears the D-threonine mark.

Epimerization of most, and perhaps all, L- to D-amino acids is catalyzed by PoyD, when PoyA and PoyD are coexpressed in E.coli. In terms of processing, N-methylations are catalyzed by PoyE, when PoyA and PoyE are coexpressed in E.coli. Post-translationally, to obtain 2-oxo-5,5-dimethylhexanoate, Thr-97 is firstly dehydrated by PoyF. The second step possibly corresponds to methylation by PoyB/C, and the third step may be a cleavage by PoyH/J.

Functionally, antimicrobial peptide active against Gram-positive bacteria (MIC=4-&gt;125 ug/ml). May act by forming transmembrane ion channels, since the peptide rapidly depolarizes the bacterial cytoplasmic membrane, simultaneously decreasing the membrane potential and intracellular potassium contents. The polypeptide is Polytheonamide B (Bacterium symbiont subsp. Theonella swinhoei (strain pTSMAC1)).